A 382-amino-acid chain; its full sequence is 1-deoxy-D-xylulose 5-phosphate reductoisomerase (382 aa).

The NADPH site is built by S10, G11, S12, I13, G36, K37, N38, and N121. K122 is a binding site for 1-deoxy-D-xylulose 5-phosphate. Residue E123 coordinates NADPH. A Mn(2+)-binding site is contributed by D147. The 1-deoxy-D-xylulose 5-phosphate site is built by S148, E149, S173, and H196. Position 149 (E149) interacts with Mn(2+). G202 contacts NADPH. 1-deoxy-D-xylulose 5-phosphate contacts are provided by S209, N214, K215, and E218. Residue E218 participates in Mn(2+) binding.

It belongs to the DXR family. The cofactor is Mg(2+). It depends on Mn(2+) as a cofactor.

The catalysed reaction is 2-C-methyl-D-erythritol 4-phosphate + NADP(+) = 1-deoxy-D-xylulose 5-phosphate + NADPH + H(+). It participates in isoprenoid biosynthesis; isopentenyl diphosphate biosynthesis via DXP pathway; isopentenyl diphosphate from 1-deoxy-D-xylulose 5-phosphate: step 1/6. Its function is as follows. Catalyzes the NADPH-dependent rearrangement and reduction of 1-deoxy-D-xylulose-5-phosphate (DXP) to 2-C-methyl-D-erythritol 4-phosphate (MEP). The polypeptide is 1-deoxy-D-xylulose 5-phosphate reductoisomerase (Geobacillus kaustophilus (strain HTA426)).